Reading from the N-terminus, the 306-residue chain is MSEVTRSLLQRWGASFRRGADFDSWGQLVEAIDEYQILARHLQKEAQAQHNNSEFTEEQKKTIGKIATCLELRSAALQSTQSQEEFKLEDLKKLEPILKNILTYNKEFPFDVQPVPLRRILAPGEEENLEFEEDEEEGGAGAGSPDSFPARVPGTLLPRLPSEPGMTLLTIRIEKIGLKDAGQCIDPYITVSVKDLNGIDLTPVQDTPVASRKEDTYVHFNVDIELQKHVEKLTKGAAIFFEFKHYKPKKRFTSTKCFAFMEMDEIKPGPIVIELYKKPTDFKRKKLQLLTKKPLYLHLHQTLHKE.

Positions 27-62 form a coiled coil; that stretch reads QLVEAIDEYQILARHLQKEAQAQHNNSEFTEEQKKT. Residues 128-138 are compositionally biased toward acidic residues; it reads NLEFEEDEEEG. Residues 128 to 153 form a disordered region; the sequence is NLEFEEDEEEGGAGAGSPDSFPARVP. Residue Ser-144 is modified to Phosphoserine. An axin-binding region spans residues 154-221; it reads GTLLPRLPSE…RKEDTYVHFN (68 aa). The C2 Aida-type domain maps to 157–304; sequence LPRLPSEPGM…LYLHLHQTLH (148 aa).

Belongs to the AIDA family. In terms of assembly, interacts with AXIN1. As to expression, widely expressed in adult tissues, with highest expression in the heart and skeletal muscle.

Acts as a ventralizing factor during embryogenesis. Inhibits axin-mediated JNK activation by binding axin and disrupting axin homodimerization. This in turn antagonizes a Wnt/beta-catenin-independent dorsalization pathway activated by AXIN/JNK-signaling. The chain is Axin interactor, dorsalization-associated protein (AIDA) from Homo sapiens (Human).